The chain runs to 79 residues: Putative membrane protein insertion efficiency factor (79 aa).

This sequence belongs to the UPF0161 family.

The protein localises to the cell inner membrane. Could be involved in insertion of integral membrane proteins into the membrane. The chain is Putative membrane protein insertion efficiency factor from Rippkaea orientalis (strain PCC 8801 / RF-1) (Cyanothece sp. (strain PCC 8801)).